Reading from the N-terminus, the 223-residue chain is Killer cell lectin-like receptor subfamily B member 1B allele C (223 aa).

Residues 1–45 (MDTAVVYADLHLARTGEPKRESPPSLSPDTCQCPRWHRLALKLGC) are Cytoplasmic-facing. Residues 5–10 (VVYADL) carry the ITIM motif motif. Residues 31–34 (CQCP) carry the LCK-binding motif motif. Residues 46-66 (ACFILLVLSVIGLGVLVLTLL) form a helical; Signal-anchor for type II membrane protein membrane-spanning segment. The Extracellular segment spans residues 67–223 (QKPLLQNSPA…LKRESTCNDS (157 aa)). Residues 101–211 (HRDKCFHVSQ…CDSDNIWICQ (111 aa)) form the C-type lectin domain. 2 cysteine pairs are disulfide-bonded: cysteine 122–cysteine 210 and cysteine 189–cysteine 202.

Homodimer; disulfide-linked. Interacts with tyrosine kinase LCK. Binds PTPN6/SHP-1 in a phosphorylation-dependent manner. Expressed in a subset of natural killer cells.

The protein localises to the membrane. Receptor for CLEC2D/OCIL. Ligand-binding contributes to inhibition of cytotoxic natural killer (NK) cells. May mediate MHC class I-independent 'missing-self' recognition of allografts, tumor cells and virus-infected cells. This chain is Killer cell lectin-like receptor subfamily B member 1B allele C, found in Rattus norvegicus (Rat).